Reading from the N-terminus, the 343-residue chain is MAPGSIASSDTSSSTSSSSTSSASSASAEGSSRPLGSEKPGLARGAVRAPRRHPPVLRMVLEALQAGERRRGTSVAAIKVYILQKYPTVDALRLNHLLKQALATGLHRGLLIRPVNSKAKGATGSFKLVPKDKRKIPPRKTAPRMPGQAEGKDPKKPSESKKDPANTVEVKKGSRKPREERAAPSKPGAAKKAPKKGTQTKDPEPRLGEAKKSSRRPDKAAQAPPSAGGPGGKSKVKERGSRQADTKAHRKTQPGSQSSKSTVTKGENGAPLAKKKMGGKVPKEAAGEGPKAKAPVPPKGAGSKKEPGPLAGKAEASKGPRKPGIPTKSSVSKAASKKAEAEG.

Residues 1–32 are compositionally biased toward low complexity; that stretch reads MAPGSIASSDTSSSTSSSSTSSASSASAEGSS. Disordered stretches follow at residues 1–50 and 122–343; these read MAPG…VRAP and ATGS…EAEG. Positions 52-130 constitute an H15 domain; the sequence is RHPPVLRMVL…GATGSFKLVP (79 aa). A compositionally biased stretch (basic residues) spans 132-142; sequence DKRKIPPRKTA. Basic and acidic residues-rich tracts occupy residues 150–183, 199–219, and 235–247; these read EGKD…ERAA, QTKD…RPDK, and KVKE…ADTK. The Nuclear localization signal motif lies at 161–176; that stretch reads KKDPANTVEVKKGSRK. Residues 253–265 are compositionally biased toward polar residues; that stretch reads QPGSQSSKSTVTK.

Belongs to the histone H1/H5 family. In terms of tissue distribution, oocyte (at protein level).

It is found in the cytoplasm. The protein resides in the nucleus. The protein localises to the chromosome. In terms of biological role, may play a key role in the control of gene expression during oogenesis and early embryogenesis, presumably through the perturbation of chromatin structure. Essential for meiotic maturation of germinal vesicle-stage oocytes. The somatic type linker histone H1c is rapidly replaced by H1oo in a donor nucleus transplanted into an oocyte. The greater mobility of H1oo as compared to H1c may contribute to this rapid replacement and increased instability of the embryonic chromatin structure. The rapid replacement of H1c with H1oo may play an important role in nuclear remodeling. This Bos taurus (Bovine) protein is Histone H1.8.